The primary structure comprises 152 residues: Complexin (152 aa).

The disordered stretch occupies residues 1–119 (MAAFIAKQMV…EEEDDDEFAK (119 aa)). Over residues 23 to 39 (DEGEKEGNENAEEEAAA) the composition is skewed to acidic residues. Basic and acidic residues-rich tracts occupy residues 41 to 82 (EEAR…VKEE) and 90 to 104 (DEGRVGRKKKTKEEL). Residues 59 to 75 (EEEREEMRQTIRDKYGL) are interaction with the SNARE complex. At cysteine 149 the chain carries Cysteine methyl ester. The S-farnesyl cysteine moiety is linked to residue cysteine 149. Residues 150–152 (SLQ) constitute a propeptide, removed in mature form.

The protein belongs to the complexin/synaphin family. As to quaternary structure, binds to the SNARE core complex containing SNAP25, synaptobrevin and syntaxin-1.

The protein localises to the membrane. It localises to the cytoplasm. Its subcellular location is the cytosol. Positively regulates a late step in synaptic vesicle exocytosis. The sequence is that of Complexin (cpx) from Doryteuthis pealeii (Longfin inshore squid).